The following is a 2161-amino-acid chain: SH3 and multiple ankyrin repeat domains protein 1 (2161 aa).

The disordered stretch occupies residues 1–53; it reads MTHSPATSEDEERHSASECPEGGSESDSSPDGPGRGPRGTRGQGSGAPGSLAS. The span at 17 to 32 shows a compositional bias: low complexity; it reads SECPEGGSESDSSPDG. A compositionally biased stretch (gly residues) spans 33-47; the sequence is PGRGPRGTRGQGSGA. The residue at position 186 (Tyr186) is a Phosphotyrosine. 6 ANK repeats span residues 212-245, 246-278, 279-312, 313-345, 346-378, and 379-395; these read SGET…FRAR, DGMT…YKDR, RGLT…IADE, NGWQ…AQNA, SGNT…VKNN, and NGQT…NFEL. 2 disordered regions span residues 412–433 and 455–546; these read ESPK…VPPA and GAAS…SRGR. A compositionally biased stretch (low complexity) spans 455-479; sequence GAASSGAPGPTSGSQGQSQPSAPTT. Positions 527–542 are enriched in gly residues; sequence PAGGTGGSGGPGGSLG. Ser540 bears the Phosphoserine mark. An Omega-N-methylarginine modification is found at Arg544. The SH3 domain occupies 554–613; that stretch reads VPGRSFMAVKSYQAQAEGEISLSKGEKIKVLSIGEGGFWEGQVKGRVGWFPSDCLEEVAN. One can recognise a PDZ domain in the interval 663–757; the sequence is TVLLQKKDSE…TLMVKVVMVT (95 aa). Phosphoserine occurs at positions 671 and 791. The segment at 832-886 is disordered; it reads TISASESPGPGGLASLGKHRPKGFFATESSFDPHHRAQPSYERPSFLPPGPGLML. Ser890 is subject to Phosphoserine. 7 disordered regions span residues 909-1229, 1241-1289, 1353-1720, 1734-1785, 1827-1860, 1892-1983, and 1996-2023; these read SRSL…LDFT, RREG…KSID, LGLA…GVAS, GQAF…PTSP, LPTA…QPQA, PWAR…TRHL, and RRAP…LPIL. The segment covering 920-939 has biased composition (pro residues); that stretch reads IPPPPTTSPPEPPYSTPPVP. Position 950 is an omega-N-methylarginine (Arg950). Basic residues predominate over residues 996 to 1020; the sequence is AHHHPPHHHHHHAPPPQPHHHHAHP. Omega-N-methylarginine is present on residues Arg1051, Arg1090, and Arg1101. The span at 1127–1144 shows a compositional bias: pro residues; that stretch reads PPAPSPTSPASPQPPPAV. The span at 1164–1181 shows a compositional bias: low complexity; the sequence is STSSSGRSSQGSSTEAEP. Residues 1199-1220 are compositionally biased toward pro residues; it reads SPAPAMSPVPPSPSPVPTPASP. Residues 1241–1252 show a composition bias toward basic and acidic residues; sequence RREGGWQNEARR. An Asymmetric dimethylarginine modification is found at Arg1253. Ser1287 is subject to Phosphoserine. The segment covering 1359–1368 has biased composition (basic and acidic residues); sequence ARERALKESS. Residues 1374-1391 show a composition bias toward pro residues; it reads PQPPPRPPSPRYEAPPPT. Position 1423 is an omega-N-methylarginine (Arg1423). At Ser1436 the chain carries Phosphoserine. Composition is skewed to pro residues over residues 1517-1532 and 1583-1609; these read GVPP…PSPT and PLTP…PPPA. The segment covering 1618–1636 has biased composition (polar residues); it reads DSTASSLTSYDSEVATLTQ. The segment covering 1644–1670 has biased composition (pro residues); it reads DPHPPGPPAPAAPAPAAPQPGPDPPPG. A compositionally biased stretch (basic and acidic residues) spans 1678 to 1688; the sequence is VDSRSSSDHPL. A compositionally biased stretch (low complexity) spans 1692 to 1702; it reads SSASTLSSLSA. Gly residues-rich tracts occupy residues 1703-1718 and 1764-1774; these read EGGG…GAGV and ASGGLRPGPSG. Low complexity predominate over residues 1775-1785; the sequence is GLRDPVTPTSP. Pro residues predominate over residues 1844–1855; that stretch reads PGPPPPPLPGPL. Arg1895 carries the omega-N-methylarginine modification. Low complexity-rich tracts occupy residues 1917–1940, 1954–1980, and 1996–2006; these read SSLQ…VSSL, TGTG…STST, and RRAPSPSLLPA. Arg2016, Arg2036, and Arg2074 each carry omega-N-methylarginine. One can recognise an SAM domain in the interval 2098–2161; that stretch reads WTKFDVADWL…DRALKFFLER (64 aa).

Belongs to the SHANK family. As to quaternary structure, may homomultimerize via its SAM domain. Interacts with the C-terminus of SSTR2 via the PDZ domain. Interacts with IGSF9, SHARPIN, SPTAN1, HOMER1 and DLGAP1/GKAP isoforms 1 and 2. Part of a complex with DLG4/PSD-95 and DLGAP1/GKAP. Interacts with BAIAP2. Interacts with HOMER1 and HOMER3. Expressed in brain particularly in the amygdala, hippocampus, substantia nigra and thalamus. Isoform 2 seems to be expressed ubiquitously.

The protein resides in the cytoplasm. The protein localises to the postsynaptic density. Its subcellular location is the synapse. Functionally, seems to be an adapter protein in the postsynaptic density (PSD) of excitatory synapses that interconnects receptors of the postsynaptic membrane including NMDA-type and metabotropic glutamate receptors via complexes with GKAP/PSD-95 and Homer, respectively, and the actin-based cytoskeleton. Plays a role in the structural and functional organization of the dendritic spine and synaptic junction. In Homo sapiens (Human), this protein is SH3 and multiple ankyrin repeat domains protein 1 (SHANK1).